The sequence spans 402 residues: tRNA pseudouridine synthase Pus10 (402 aa).

The THUMP domain occupies 37 to 159; sequence RLRGERLVEK…QIRVHVQINP (123 aa). Aspartate 228 (nucleophile) is an active-site residue. The substrate site is built by tyrosine 296 and tyrosine 364.

This sequence belongs to the pseudouridine synthase Pus10 family.

It catalyses the reaction uridine(54) in tRNA = pseudouridine(54) in tRNA. The catalysed reaction is uridine(55) in tRNA = pseudouridine(55) in tRNA. Functionally, responsible for synthesis of pseudouridine from uracil-54 and uracil-55 in the psi GC loop of transfer RNAs. The sequence is that of tRNA pseudouridine synthase Pus10 from Methanothermobacter marburgensis (strain ATCC BAA-927 / DSM 2133 / JCM 14651 / NBRC 100331 / OCM 82 / Marburg) (Methanobacterium thermoautotrophicum).